Reading from the N-terminus, the 508-residue chain is MQMGDHQMMGNQRYYRTYVQKVMPAQAGGAVSQNATYVQTAGIRTVHHDGNGQQRIVQLPPGVRQIQQNGVGPAYVRQVPGGQPMQVNFGHPGTIAGRNVAVGVQMRPVQGHNVQQGYQRQQVANQIQQQNRAVFMAQNQQGQQQISYAQAQHRQQQQNQQQHHQQPQHFNHPSQQNQMIMQHRQPQMHHNQQHQMVQPQMTRHQMAQHHAQQPHPQIYVPRDMNLAVPLREPSPEPIPVKIEVPDVPPEGTSAANEEPMPDDGDIDIQIRNVVCNYTLPLHIDLRKLAMNTHNVTYEREKGVMMKQKRSPGCYIKVYSSGKVYIVGCRSEADCKRAARSIARHVQRVMGKTKERVSIRNYRVNNVLATCRLPFGIKIEEVAAKYPSESTYEPELSVGLVWRSVTPKATLRIHTTGSITVTGAQSEADVLEVLSKIYPIVLEFRCLERAKGNVAAQKKRKRKAPVNRGPPIKRERFDDSNYRNSGVINNQVYFSDEDEDLYDELDLEE.

Disordered regions lie at residues 145–190 (QISY…QMHH), 236–262 (EPIPVKIEVPDVPPEGTSAANEEPMPD), and 456–479 (QKKRKRKAPVNRGPPIKRERFDDS).

Belongs to the TBP family.

Its subcellular location is the nucleus. In terms of biological role, may be a general transcription factor. Plays an essential role for RNA polymerase II/ama-1 transcription in early embryos whereby it activates a subset of RNA polymerase II promoters and facilitates the reestablishment of transcription after mitosis. The protein is TATA box-binding protein-like 1 of Caenorhabditis elegans.